A 257-amino-acid polypeptide reads, in one-letter code: 3-alpha-hydroxysteroid dehydrogenase/carbonyl reductase (257 aa).

NAD(+) contacts are provided by residues 8–13, Asp32, 41–42, and Gly71; these read GCATGI and DL. A substrate-binding site is contributed by Ser114. Positions 155 and 159 each coordinate NAD(+). Residue Tyr155 is the Proton acceptor of the active site.

The protein belongs to the short-chain dehydrogenases/reductases (SDR) family. In terms of assembly, homodimer.

The protein resides in the cytoplasm. The enzyme catalyses a 3alpha-hydroxysteroid + NADP(+) = a 3-oxosteroid + NADPH + H(+). It carries out the reaction a 3alpha-hydroxysteroid + NAD(+) = a 3-oxosteroid + NADH + H(+). Functionally, catalyzes the reversible interconversion of hydroxy and oxo groups at position 3 of the steroid nucleus. Along with the 3 alpha-hydroxysteroid dehydrogenase and 3-oxo-reductase activities towards a variety of cis or trans fused A/B ring steroids, it also reduces several xenobiotic carbonyl compounds, including a metyrapone-based class of insecticides, to the respective alcohol metabolites. No detectable activity on testosterone, progesterone or 3-oxo-desogestrel. The sequence is that of 3-alpha-hydroxysteroid dehydrogenase/carbonyl reductase (hsdA) from Comamonas testosteroni (Pseudomonas testosteroni).